Here is a 454-residue protein sequence, read N- to C-terminus: Ig mu chain C region (454 aa).

The tract at residues 1–105 (SPSSPTVFPL…NKDLRVPIPV (105 aa)) is CH1. Cys-27 and Cys-88 are disulfide-bonded. Asn-45, Asn-112, Asn-192, Asn-210, Asn-238, Asn-257, and Asn-280 each carry an N-linked (GlcNAc...) asparagine glycan. The tract at residues 106–218 (VTEMNPNVSV…KNVSSTCAAS (113 aa)) is CH2. Cys-135 and Cys-198 form a disulfide bridge. The interval 219 to 324 (PSTDIQAFPI…QKKFISKPRE (106 aa)) is CH3. Disulfide bonds link Cys-245–Cys-304 and Cys-352–Cys-414. A CH4 region spans residues 325–454 (MNKTPPAVYQ…IMSDAGGTCY (130 aa)). N-linked (GlcNAc...) asparagine glycosylation occurs at Asn-441.

The protein is Ig mu chain C region of Mesocricetus auratus (Golden hamster).